A 305-amino-acid chain; its full sequence is Probable lipid kinase YegS-like (305 aa).

A DAGKc domain is found at 1 to 129 (MTQRRAMLIL…VDLGEVGGKL (129 aa)). ATP is bound by residues Thr-39, 65 to 71 (GDGTLRD), and Thr-92. Residues Leu-210, Asp-213, and Leu-215 each coordinate Mg(2+). Residue Glu-268 is the Proton acceptor of the active site.

This sequence belongs to the diacylglycerol/lipid kinase family. YegS lipid kinase subfamily. It depends on Mg(2+) as a cofactor. The cofactor is Ca(2+).

Its subcellular location is the cytoplasm. Its function is as follows. Probably phosphorylates lipids; the in vivo substrate is unknown. The polypeptide is Probable lipid kinase YegS-like (Pseudomonas syringae pv. syringae (strain B728a)).